The sequence spans 161 residues: MAKEVVEVLVTGGRATAGPPLGPAIGPLGVNVMQVVKEINEKTKDYEGMQVPVKVIVDTETRKFEIEVGIPPTTALIKKELGIETAAHEPRHEVVGNLTLEQVIKIAKMKKDAMLSYTLKNAVKEVLGTCGSMGVTVEGKDPKEVQKEIDAGVYDEYFKEE.

It belongs to the universal ribosomal protein uL11 family. As to quaternary structure, part of the ribosomal stalk of the 50S ribosomal subunit. Interacts with L10 and the large rRNA to form the base of the stalk. L10 forms an elongated spine to which L12 dimers bind in a sequential fashion forming a multimeric L10(L12)X complex.

Its function is as follows. Forms part of the ribosomal stalk which helps the ribosome interact with GTP-bound translation factors. The polypeptide is Large ribosomal subunit protein uL11 (Methanocaldococcus jannaschii (strain ATCC 43067 / DSM 2661 / JAL-1 / JCM 10045 / NBRC 100440) (Methanococcus jannaschii)).